A 914-amino-acid polypeptide reads, in one-letter code: Probable UDP-N-acetylglucosamine--peptide N-acetylglucosaminyltransferase SPINDLY (914 aa).

The interval methionine 1 to lysine 39 is disordered. The span at glycine 19–serine 37 shows a compositional bias: low complexity. A Phosphoserine modification is found at serine 35. 11 TPR repeats span residues glycine 43–asparagine 76, valine 77–asparagine 110, cysteine 112–tyrosine 144, alanine 152–tyrosine 185, alanine 186–tyrosine 219, alanine 220–phenylalanine 253, alanine 261–tyrosine 294, alanine 295–cysteine 328, alanine 329–phenylalanine 362, glutamine 364–tyrosine 396, and alanine 397–serine 430. The catalytic region stretch occupies residues arginine 431–serine 914. Positions proline 866 to serine 914 are disordered. Over residues valine 877 to alanine 889 the composition is skewed to polar residues. The segment covering proline 894–serine 907 has biased composition (low complexity).

It belongs to the glycosyltransferase 41 family. O-GlcNAc transferase subfamily. In terms of assembly, homomultimer; via its TPR repeats. Interacts with GI. Interacts with TCP14 and TCP15. Interacts (via N-terminus) with APRR5. Interacts with CPN20. Widely expressed. Present throughout the plant (at protein level).

The protein localises to the cytoplasm. It localises to the nucleus. The enzyme catalyses L-seryl-[protein] + UDP-N-acetyl-alpha-D-glucosamine = 3-O-(N-acetyl-beta-D-glucosaminyl)-L-seryl-[protein] + UDP + H(+). It catalyses the reaction L-threonyl-[protein] + UDP-N-acetyl-alpha-D-glucosamine = 3-O-(N-acetyl-beta-D-glucosaminyl)-L-threonyl-[protein] + UDP + H(+). The catalysed reaction is L-seryl-[protein] + GDP-beta-L-fucose = 3-O-(alpha-L-fucosyl)-L-seryl-[protein] + GDP + H(+). It carries out the reaction L-threonyl-[protein] + GDP-beta-L-fucose = 3-O-(alpha-L-fucosyl)-L-threonyl-[protein] + GDP + H(+). Its pathway is protein modification; protein glycosylation. Its function is as follows. Probable O-linked N-acetylglucosamine transferase (OGT) involved in various processes such as gibberellin (GA) signaling pathway and circadian clock. OGTs catalyze the addition of nucleotide-activated sugars directly onto the polypeptide through O-glycosidic linkage with the hydroxyl of serine or threonine. Probably acts by adding O-linked sugars to yet unknown proteins. Acts as a repressor of GA signaling pathway to inhibit hypocotyl elongation. Functions with GIGANTEA (GI) in pathways controlling flowering, circadian cotyledon movements and hypocotyl elongation. Acts as a light-regulated promoter of elongation via its interaction with GI. Acts as an activator of cytokinin signaling. Required with SEC for gamete and seed development. Its OGT activity has been proved in vitro but not in vivo. Possesses O-fucosyltransferase activity on specific serine and threonine residues. Mediates O-fucosylation of the DELLA protein RGA, a repressor of the GA signaling pathway. O-fucosylation enhances RGA activity by promoting RGA binding to key transcription factors in brassinosteroid and light-signaling pathways. Regulates root hair patterning upstream of the transcription factor WER, independently of DELLA proteins and GA signaling. Involved in abscisic acid (ABA) signaling partly through functional ABAR. Mediates O-fucosylation of CPN20 that may depress ABA responses during seed germination and seedling development. Involved in the modulation of the pace of the circadian clock by mediating O-fucosylation of APRR5, one of the core circadian clock components. O-fucosylation promotes APRR5 proteolysis. The sequence is that of Probable UDP-N-acetylglucosamine--peptide N-acetylglucosaminyltransferase SPINDLY from Arabidopsis thaliana (Mouse-ear cress).